A 222-amino-acid chain; its full sequence is Urease accessory protein UreF (222 aa).

It belongs to the UreF family. In terms of assembly, ureD, UreF and UreG form a complex that acts as a GTP-hydrolysis-dependent molecular chaperone, activating the urease apoprotein by helping to assemble the nickel containing metallocenter of UreC. The UreE protein probably delivers the nickel.

The protein resides in the cytoplasm. Required for maturation of urease via the functional incorporation of the urease nickel metallocenter. The sequence is that of Urease accessory protein UreF from Roseobacter denitrificans (strain ATCC 33942 / OCh 114) (Erythrobacter sp. (strain OCh 114)).